The following is a 736-amino-acid chain: Elongation factor 2 (736 aa).

The 245-residue stretch at 18–262 (TRVRNIGIIA…AVIKFVPNPV (245 aa)) folds into the tr-type G domain. GTP is bound by residues 27-34 (AHVDHGKT), 93-97 (DTPGH), and 147-150 (NKVD). H603 is subject to Diphthamide.

It belongs to the TRAFAC class translation factor GTPase superfamily. Classic translation factor GTPase family. EF-G/EF-2 subfamily.

It is found in the cytoplasm. Its function is as follows. Catalyzes the GTP-dependent ribosomal translocation step during translation elongation. During this step, the ribosome changes from the pre-translocational (PRE) to the post-translocational (POST) state as the newly formed A-site-bound peptidyl-tRNA and P-site-bound deacylated tRNA move to the P and E sites, respectively. Catalyzes the coordinated movement of the two tRNA molecules, the mRNA and conformational changes in the ribosome. The chain is Elongation factor 2 from Metallosphaera sedula (strain ATCC 51363 / DSM 5348 / JCM 9185 / NBRC 15509 / TH2).